A 1615-amino-acid chain; its full sequence is Ras-responsive element-binding protein 1 (1615 aa).

The interval 1-44 (MMSAVMNVGKIAENGGTSQTVKSPSKSPAPNRIGRRNQETKEEK) is disordered. Polar residues predominate over residues 15–28 (GGTSQTVKSPSKSP). 3 C2H2-type zinc fingers span residues 47 to 69 (YTCP…IRQH), 78 to 100 (HSCS…MLVH), and 106 to 128 (YKCS…MKIH). The disordered stretch occupies residues 127 to 169 (IHEKDPNSTASTTPPSPLKAKRLSSKRKFSQDAEMDREERTPA). Residues 145 to 154 (KAKRLSSKRK) show a composition bias toward basic residues. 3 C2H2-type zinc fingers span residues 189–211 (YHCP…METH), 216–239 (LRCD…AVIH), and 297–319 (FICE…TETH). The tract at residues 511–556 (SAQQASPGCISPSLPPPPLRLIKNSVETSSNSHLSQPGAKSSPSSQ) is disordered. A compositionally biased stretch (polar residues) spans 535-549 (SVETSSNSHLSQPGA). 4 consecutive C2H2-type zinc fingers follow at residues 622-644 (YPCR…IRSH), 650-672 (YQCN…LRTH), 732-754 (TVCK…MRTH), and 763-788 (FECK…QHLH). Disordered stretches follow at residues 1025-1044 (AADA…KSGN), 1058-1104 (DSNL…VDLE), and 1123-1162 (KFSP…KRNT). A compositionally biased stretch (low complexity) spans 1026-1036 (ADASPKAASSS). The segment covering 1082-1095 (TKKRGRKKGTKNKP) has biased composition (basic residues). Polar residues predominate over residues 1123-1132 (KFSPFLQSTD). The C2H2-type 11 zinc-finger motif lies at 1170–1192 (ITCPYCPRVFSWASSLQRHMLTH). Disordered regions lie at residues 1214-1269 (CEKE…KSLD) and 1313-1418 (LSRH…DKRK). Over residues 1242–1262 (PAEEDAEEKADEYEEGPEEDS) the composition is skewed to acidic residues. The C2H2-type 12 zinc finger occupies 1298-1320 (HACDVCGKTFKFAGALSRHKKAH). Basic and acidic residues-rich tracts occupy residues 1321 to 1339 (IRED…KSIQ) and 1388 to 1414 (GTER…TAKA). C2H2-type zinc fingers lie at residues 1419 to 1441 (KVCT…MRSH) and 1447 to 1469 (YKCQ…QRIH). The span at 1464–1477 (RHQRIHQKVKNTRN) shows a compositional bias: basic residues. Residues 1464–1585 (RHQRIHQKVK…SELERPSGFI (122 aa)) form a disordered region. 2 stretches are compositionally biased toward basic and acidic residues: residues 1478–1493 (HGKE…RCGE) and 1566–1580 (PAKD…ELER).

Belongs to the krueppel C2H2-type zinc-finger protein family. As to expression, broadly expressed, except in brain.

It is found in the nucleus. Functionally, transcription factor that binds specifically to the RAS-responsive elements (RRE) of gene promoters. This is Ras-responsive element-binding protein 1 (RREB1) from Gallus gallus (Chicken).